Here is a 171-residue protein sequence, read N- to C-terminus: uncharacterized protein (171 aa).

The signal sequence occupies residues 1–18 (MRYSKLTMLIPCALLLSA). C19 carries the N-palmitoyl cysteine lipid modification. C19 is lipidated: S-diacylglycerol cysteine.

It localises to the cell membrane. This is an uncharacterized protein from Escherichia coli (strain K12).